Reading from the N-terminus, the 306-residue chain is Agmatinase (306 aa).

Mn(2+) is bound by residues His-126, Asp-149, His-151, Asp-153, Asp-230, and Asp-232.

The protein belongs to the arginase family. Agmatinase subfamily. Requires Mn(2+) as cofactor.

It carries out the reaction agmatine + H2O = urea + putrescine. The protein operates within amine and polyamine biosynthesis; putrescine biosynthesis via agmatine pathway; putrescine from agmatine: step 1/1. In terms of biological role, catalyzes the formation of putrescine from agmatine. The chain is Agmatinase from Cronobacter sakazakii (strain ATCC BAA-894) (Enterobacter sakazakii).